The sequence spans 542 residues: 4-coumarate--CoA ligase-like 5 (542 aa).

Residues S204, S205, G206, T207, T208, and K212 each coordinate ATP. A (E)-4-coumaroyl-AMP-binding site is contributed by F262. R282 contributes to the CoA binding site. Residues 284–353 (DFIAALRAIE…SVFPNVELVQ (70 aa)) form an SBD1 region. (E)-4-coumaroyl-AMP contacts are provided by G331, Q353, G354, and T358. ATP-binding residues include Q353, G354, T358, D418, and R433. Residues 354-397 (GYGLTESSGAVAATVGPEESKAYGSVGKLGSHLQAKIVDPSTGY) are SBD2. 2 residues coordinate (E)-4-coumaroyl-AMP: K435 and K439. Residues K441 and G442 each contribute to the CoA site. An ATP-binding site is contributed by K524.

The protein belongs to the ATP-dependent AMP-binding enzyme family. It depends on Mg(2+) as a cofactor.

The catalysed reaction is (E)-4-coumarate + ATP + CoA = (E)-4-coumaroyl-CoA + AMP + diphosphate. It carries out the reaction (E)-4-coumarate + ATP + H(+) = (E)-4-coumaroyl-AMP + diphosphate. It catalyses the reaction (E)-4-coumaroyl-AMP + CoA = (E)-4-coumaroyl-CoA + AMP + H(+). Functionally, carboxylate--CoA ligase that may use 4-coumarate as substrate. Follows a two-step reaction mechanism, wherein the carboxylate substrate first undergoes adenylation by ATP, followed by a thioesterification in the presence of CoA to yield the final CoA thioester. The protein is 4-coumarate--CoA ligase-like 5 (4CLL5) of Oryza sativa subsp. japonica (Rice).